The chain runs to 1213 residues: MVDVNRFKSMQITLASPSKVRSWSYGEVKKPETINYRTLKPEREGLFDEVIFGPTKDWECACGKYKRIRYKGIVCDRCGVEVTRAKVRRERMGHIELKAPVSHIWYFKGIPSRMGLTLDMSPRALEEVIYFAAYVVIDPKDTPLEPKSLLTEREYREKLQEYGHGSFVAKMGAEAIQALLKRVDLAAEIAELKEELKSASGQKRIKAVRRLDVLDAFNKSGNKPEWMVLNILPVIPPDLRPMVQLDGGRFAASDLNDLYRRVINRNNRLARLLELNAPGIIVQNEKRMLQEAVDALIDNGRRGRPITGPGSRPLKSLSHMLKGKQGRFRQNLLGKRVDFSGRSVIAVGPTLKMYQCGVPREMAIELFKPFVMREIVAKEYAGNVKAAKRMVERGDERIWDILEEVIKEHPVLLNRAPTLHRLGIQAFEPVLIDGKALRLHPLVCEAYNADFDGDQMAIHVPLSEEAQAEARLLMLAAEHILNPKDGKPVVTPSQDMVLGNYYLTMEDAGREGEGMIFKDKDEAVMAYRNGYAHLHSRVGIAVDSMPNKPWKDNQRHKIMVTTVGKILFNDIMPEDLPYLQEPNNANLTEGTPDKYFLEPGQDIQEVIDGLEINVPFKKKNLGNIIAETFKRFRTTETSAFLDRLKDLGYYHSTLAGLTVGIADIPVIDNKAEIIDAAHHRVEEINKAFRRGLMTDDDRYVAVTTTWREAKEALEKRLIETQNPKNPIVMMMDSGARGNISNFSQLAGMRGLMAAPNGRIMELPILSNFREGLSVLEMFFSTHGARKGMTDTALKTADSGYLTRRLVDVAQDVIIREDDCGTDRGLLIRAITDGKEVTETLEERLQGRYTRKSVKHPETGEVLIGADQLITEDMARKIVDAGVEEVTIRSVFTCATRHGVCRHCYGINLATGDAVEVGEAVGTIAAQSIGEPGTQLTMRTFHTGGVASNTDITQGLPRIQEIFEARNPKGEAVITEVKGNVVEIEEDASTRTKKVYVQGKTGMGEYVVPFTARMKVEVGDEVNRGAALTEGSIQPKRLLEVRDTLSVETYLLAEVQKVYRSQGVEIGDKHVEVMVRQMLRKVRVMDPGDTDLLPGTLMDISDFTDANKDIVISGGIPATSRPVLMGITKASLETNSFLSAASFQETTRVLTDAAIRGKKDHLLGLKENVIIGKIIPAGTGMARYRNIEPQAMNEIEVIDHTEVSAEAVFTAEAE.

4 residues coordinate Zn(2+): Cys60, Cys62, Cys75, and Cys78. Mg(2+) contacts are provided by Asp450, Asp452, and Asp454. Zn(2+) contacts are provided by Cys819, Cys893, Cys900, and Cys903.

The protein belongs to the RNA polymerase beta' chain family. In terms of assembly, the RNAP catalytic core consists of 2 alpha, 1 beta, 1 beta' and 1 omega subunit. When a sigma factor is associated with the core the holoenzyme is formed, which can initiate transcription. The cofactor is Mg(2+). Requires Zn(2+) as cofactor.

The catalysed reaction is RNA(n) + a ribonucleoside 5'-triphosphate = RNA(n+1) + diphosphate. Functionally, DNA-dependent RNA polymerase catalyzes the transcription of DNA into RNA using the four ribonucleoside triphosphates as substrates. The chain is DNA-directed RNA polymerase subunit beta' from Streptococcus pyogenes serotype M6 (strain ATCC BAA-946 / MGAS10394).